The sequence spans 164 residues: MPSFDFTSEADMVGLKNAIDVTSRQIDNRYDFKGTSAKVELNEKDKVITLWGDSDFQLDQIKDLLFPAMEKKEKESVKRLDHQKVVSVSGNKVKQEMKIKDGIDSDLAKKIVKLVKDGKLKVQASIQGDTVRVQGAKRDDLQGCIALITKSITDFPIKYGNFRD.

The protein belongs to the YajQ family.

Functionally, nucleotide-binding protein. The sequence is that of Nucleotide-binding protein Daro_3028 from Dechloromonas aromatica (strain RCB).